A 189-amino-acid chain; its full sequence is Elongation factor P (189 aa).

The protein belongs to the elongation factor P family.

The protein resides in the cytoplasm. Its pathway is protein biosynthesis; polypeptide chain elongation. Involved in peptide bond synthesis. Stimulates efficient translation and peptide-bond synthesis on native or reconstituted 70S ribosomes in vitro. Probably functions indirectly by altering the affinity of the ribosome for aminoacyl-tRNA, thus increasing their reactivity as acceptors for peptidyl transferase. The protein is Elongation factor P of Rhizobium etli (strain ATCC 51251 / DSM 11541 / JCM 21823 / NBRC 15573 / CFN 42).